A 434-amino-acid polypeptide reads, in one-letter code: Chemotaxis protein MotC (434 aa).

Residues 1-15 (MLKRLCTILAASALA) form the signal peptide. Positions 344 to 417 (VVRPPLGESP…DPALDGFLAS (74 aa)) are disordered.

The protein resides in the periplasm. Required for the rotation of the flagellar motor. Might control the energy flux or coupling that drives flagellar rotation. The chain is Chemotaxis protein MotC (motC) from Rhizobium meliloti (strain 1021) (Ensifer meliloti).